The primary structure comprises 324 residues: Meiotic recombination protein DLH1 (324 aa).

G112–T119 is an ATP binding site. Position 214 (R214) interacts with dsDNA. R214, Y217, R220, R226, and R296 together coordinate ssDNA. R220 and R226 together coordinate dsDNA.

It belongs to the RecA family. DMC1 subfamily. Double stacked ring-shaped homooctamer.

It is found in the nucleus. Its function is as follows. Required for meiotic recombination, synaptonemal complex formation and cell cycle progression. The sequence is that of Meiotic recombination protein DLH1 (DLH1) from Candida albicans (Yeast).